A 458-amino-acid polypeptide reads, in one-letter code: MASTITGSQDCIVNHRGEVDGEPELDISPCQQWGEASSPISRNRDSVMTLQSGCFENIESETYLPLKVSSQIDTQDSSVKFCKNEPQDHQESRRLFVMEESTERKVIKGESCSENLQVKLVSDGQELASPLLNGEATCQNGQLKESLDPIDCNCKDIHGWKSQVVSCSQQRAHTEEKPCDHNNCGKILNTSPDGHPYEKIHTAEKQYECSQCGKNFSQSSELLLHQRDHTEEKPYKCEQCGKGFTRSSSLLIHQAVHTDEKPYKCDKCGKGFTRSSSLLIHHAVHTGEKPYKCDKCGKGFSQSSKLHIHQRVHTGEKPYECEECGMSFSQRSNLHIHQRVHTGERPYKCGECGKGFSQSSNLHIHRCIHTGEKPYQCYECGKGFSQSSDLRIHLRVHTGEKPYHCGKCGKGFSQSSKLLIHQRVHTGEKPYECSKCGKGFSQSSNLHIHQRVHKKDPR.

K108 is covalently cross-linked (Glycyl lysine isopeptide (Lys-Gly) (interchain with G-Cter in SUMO2)). Position 191 is a phosphoserine (S191). 9 C2H2-type zinc fingers span residues Y207–H229, Y235–H257, Y263–H285, Y291–H313, Y319–H341, Y347–H369, Y375–H397, Y403–H425, and Y431–H453.

Belongs to the krueppel C2H2-type zinc-finger protein family.

It localises to the nucleus. May be involved in transcriptional regulation. This is Zinc finger protein 239 (ZNF239) from Homo sapiens (Human).